The sequence spans 504 residues: Probable cytochrome P450 305a1 (504 aa).

Cys450 provides a ligand contact to heme.

Belongs to the cytochrome P450 family. Heme is required as a cofactor.

It localises to the endoplasmic reticulum membrane. The protein localises to the microsome membrane. Its function is as follows. May be involved in the metabolism of insect hormones and in the breakdown of synthetic insecticides. The chain is Probable cytochrome P450 305a1 (Cyp305a1) from Drosophila melanogaster (Fruit fly).